A 175-amino-acid polypeptide reads, in one-letter code: MMPPRLRILGIDPGLRNMGWGIVELLGSNLTYVASGVVHSDGKGELAHRLKDLHVGLAGVIDAYTPHEAAIEETFVNRDPQSTLKLGQARGIALVVPALADLAVAEYAANLIKKTVTGNGHAEKQQVAMMVKILLPKSDAGSADAVDALAVAITHAQLRRNPAALKSQAMIGQGR.

Active-site residues include D12, E72, and D144. Residues D12, E72, and D144 each coordinate Mg(2+).

The protein belongs to the RuvC family. As to quaternary structure, homodimer which binds Holliday junction (HJ) DNA. The HJ becomes 2-fold symmetrical on binding to RuvC with unstacked arms; it has a different conformation from HJ DNA in complex with RuvA. In the full resolvosome a probable DNA-RuvA(4)-RuvB(12)-RuvC(2) complex forms which resolves the HJ. Mg(2+) serves as cofactor.

Its subcellular location is the cytoplasm. It carries out the reaction Endonucleolytic cleavage at a junction such as a reciprocal single-stranded crossover between two homologous DNA duplexes (Holliday junction).. Its function is as follows. The RuvA-RuvB-RuvC complex processes Holliday junction (HJ) DNA during genetic recombination and DNA repair. Endonuclease that resolves HJ intermediates. Cleaves cruciform DNA by making single-stranded nicks across the HJ at symmetrical positions within the homologous arms, yielding a 5'-phosphate and a 3'-hydroxyl group; requires a central core of homology in the junction. The consensus cleavage sequence is 5'-(A/T)TT(C/G)-3'. Cleavage occurs on the 3'-side of the TT dinucleotide at the point of strand exchange. HJ branch migration catalyzed by RuvA-RuvB allows RuvC to scan DNA until it finds its consensus sequence, where it cleaves and resolves the cruciform DNA. This chain is Crossover junction endodeoxyribonuclease RuvC, found in Beijerinckia indica subsp. indica (strain ATCC 9039 / DSM 1715 / NCIMB 8712).